The chain runs to 147 residues: 3-dehydroquinate dehydratase (147 aa).

Tyr23 acts as the Proton acceptor in catalysis. Substrate is bound by residues Asn74, His80, and Asp87. His100 serves as the catalytic Proton donor. Residues 101-102 (LS) and Arg111 contribute to the substrate site.

It belongs to the type-II 3-dehydroquinase family. In terms of assembly, homododecamer.

The catalysed reaction is 3-dehydroquinate = 3-dehydroshikimate + H2O. It functions in the pathway metabolic intermediate biosynthesis; chorismate biosynthesis; chorismate from D-erythrose 4-phosphate and phosphoenolpyruvate: step 3/7. Functionally, catalyzes a trans-dehydration via an enolate intermediate. This Clostridium botulinum (strain Kyoto / Type A2) protein is 3-dehydroquinate dehydratase.